The following is a 494-amino-acid chain: Splicing regulatory glutamine/lysine-rich protein 1 (494 aa).

The 77-residue stretch at 69-145 (RTVYVGNLNS…RPLKINHSNN (77 aa)) folds into the RRM domain. Phosphoserine is present on residues S174 and S187. The segment at 176–494 (ISAAIEPESG…ERLCSTADAV (319 aa)) is disordered. A compositionally biased stretch (basic and acidic residues) spans 183–192 (ESGKSNERKG). Basic residues-rich tracts occupy residues 193–230 (GRSR…RSRS) and 238–262 (SKSP…RSRD). Residues 263–340 (KRKDTREKVK…DRSKEADEKR (78 aa)) are compositionally biased toward basic and acidic residues. T348 carries the post-translational modification Phosphothreonine. The segment covering 357–373 (RRSRSASRERRRRRSRS) has biased composition (basic residues). Basic and acidic residues-rich tracts occupy residues 404–453 (REKE…KEAD) and 463–474 (KDTARTEEESKA).

It belongs to the splicing factor SR family. Interacts with SREK1IP1. Homodimer. Binds SFRS1, SFRS2, SFRS3 and SFRS6. Interacts with the spliceosome. As to expression, ubiquitous. Detected in liver, brain, lung, spleen, testis and pancreas.

Its subcellular location is the nucleus. Its function is as follows. Participates in the regulation of alternative splicing by modulating the activity of other splice facors. Inhibits the splicing activity of SFRS1, SFRS2 and SFRS6. Augments the splicing activity of SFRS3. In Rattus norvegicus (Rat), this protein is Splicing regulatory glutamine/lysine-rich protein 1 (Srek1).